We begin with the raw amino-acid sequence, 1396 residues long: DNA-directed RNA polymerase subunit beta' (1396 aa).

Residues C71, C73, C86, and C89 each coordinate Zn(2+). Mg(2+)-binding residues include D462, D464, and D466. The Zn(2+) site is built by C810, C884, C891, and C894. The segment covering 1372 to 1382 (DEQLAQQREDA) has biased composition (basic and acidic residues). The segment at 1372–1396 (DEQLAQQREDAMEPLPAEIALSDAE) is disordered.

It belongs to the RNA polymerase beta' chain family. As to quaternary structure, the RNAP catalytic core consists of 2 alpha, 1 beta, 1 beta' and 1 omega subunit. When a sigma factor is associated with the core the holoenzyme is formed, which can initiate transcription. Mg(2+) is required as a cofactor. Zn(2+) serves as cofactor.

The catalysed reaction is RNA(n) + a ribonucleoside 5'-triphosphate = RNA(n+1) + diphosphate. Its function is as follows. DNA-dependent RNA polymerase catalyzes the transcription of DNA into RNA using the four ribonucleoside triphosphates as substrates. The protein is DNA-directed RNA polymerase subunit beta' of Caulobacter vibrioides (strain ATCC 19089 / CIP 103742 / CB 15) (Caulobacter crescentus).